A 311-amino-acid polypeptide reads, in one-letter code: 26S proteasome regulatory subunit RPN11 (311 aa).

The MPN domain maps to 32 to 167; the sequence is VYISSLALLK…IDAFRLISPA (136 aa). 3 residues coordinate Zn(2+): His114, His116, and Asp127. Positions 114 to 127 match the JAMM motif motif; that stretch reads HSHPGFGCWLSSVD.

It belongs to the peptidase M67A family.

Functionally, acts as a regulatory subunit of the 26 proteasome which is involved in the ATP-dependent degradation of ubiquitinated proteins. The sequence is that of 26S proteasome regulatory subunit RPN11 (RPN11) from Eremothecium gossypii (strain ATCC 10895 / CBS 109.51 / FGSC 9923 / NRRL Y-1056) (Yeast).